Consider the following 199-residue polypeptide: GTP cyclohydrolase-2 (199 aa).

49 to 53 lines the GTP pocket; the sequence is RIHSE. Zn(2+) is bound by residues cysteine 54, cysteine 65, and cysteine 67. Residues glutamine 70, 92–94, and threonine 114 each bind GTP; that span reads EGR. Aspartate 126 serves as the catalytic Proton acceptor. Catalysis depends on arginine 128, which acts as the Nucleophile. The GTP site is built by threonine 149 and lysine 154.

It belongs to the GTP cyclohydrolase II family. Homodimer. Zn(2+) is required as a cofactor.

The enzyme catalyses GTP + 4 H2O = 2,5-diamino-6-hydroxy-4-(5-phosphoribosylamino)-pyrimidine + formate + 2 phosphate + 3 H(+). It functions in the pathway cofactor biosynthesis; riboflavin biosynthesis; 5-amino-6-(D-ribitylamino)uracil from GTP: step 1/4. Functionally, catalyzes the conversion of GTP to 2,5-diamino-6-ribosylamino-4(3H)-pyrimidinone 5'-phosphate (DARP), formate and pyrophosphate. This Proteus mirabilis (strain HI4320) protein is GTP cyclohydrolase-2.